The sequence spans 383 residues: MEEFQGPEPRGQMMSENPRSLELNQRKWWISVFICGFLIFAGDSLVMLLLNFFYVQDNRSESDQDRQYKGTWTQALIQNAAFPILIPFFFILSSPKPNPETVSNQTNNGWFRVLSLYVSLGVLVSVYSKLYALGKLYVGWGILLSTQLILTSLFSAFINRLKFNRWIIISIIFTLGADFFGGPAFAGTPNEDETDPYDIKAWLILIFPTLAFSLSLCLMQLGFDKVLVKTKRYGNKKVFRMVLEMQICVSFIATLICTVGLFASGEFKELKGDSERFKKGKTYYILSLVGLALSWQVWAVGLLGLVLLVSGLFADVVHMGASPVVALLVVLAFDFMDDEFGWQRRGALLGAVLALASYFYSLHTKKKKEIAELNKRENNNSEA.

10 consecutive transmembrane segments (helical) span residues 30 to 50 (ISVFICGFLIFAGDSLVMLLL), 72 to 92 (WTQALIQNAAFPILIPFFFIL), 113 to 133 (VLSLYVSLGVLVSVYSKLYAL), 138 to 158 (VGWGILLSTQLILTSLFSAFI), 166 to 186 (WIIISIIFTLGADFFGGPAFA), 203 to 223 (LILIFPTLAFSLSLCLMQLGF), 247 to 267 (ICVSFIATLICTVGLFASGEF), 297 to 317 (VWAVGLLGLVLLVSGLFADVV), 322 to 342 (SPVVALLVVLAFDFMDDEFGW), and 346 to 363 (GALLGAVLALASYFYSLH).

Belongs to the purine permeases (TC 2.A.7.14) family.

It localises to the membrane. In Arabidopsis thaliana (Mouse-ear cress), this protein is Probable purine permease 16 (PUP16).